The chain runs to 252 residues: Protein GrpE (252 aa).

Polar residues predominate over residues 1-22; sequence MHNPQSRGHNLSQAMSDQTVTN. A disordered region spans residues 1-70; the sequence is MHNPQSRGHN…EEDQASEATS (70 aa).

The protein belongs to the GrpE family. In terms of assembly, homodimer.

It localises to the cytoplasm. Its function is as follows. Participates actively in the response to hyperosmotic and heat shock by preventing the aggregation of stress-denatured proteins, in association with DnaK and GrpE. It is the nucleotide exchange factor for DnaK and may function as a thermosensor. Unfolded proteins bind initially to DnaJ; upon interaction with the DnaJ-bound protein, DnaK hydrolyzes its bound ATP, resulting in the formation of a stable complex. GrpE releases ADP from DnaK; ATP binding to DnaK triggers the release of the substrate protein, thus completing the reaction cycle. Several rounds of ATP-dependent interactions between DnaJ, DnaK and GrpE are required for fully efficient folding. This Thermosynechococcus vestitus (strain NIES-2133 / IAM M-273 / BP-1) protein is Protein GrpE.